The following is a 167-amino-acid chain: Iron-sulfur cluster assembly protein 1 (167 aa).

The N-terminal 50 residues, 1-50, are a transit peptide targeting the mitochondrion; the sequence is MMLKQAAKKALGLTSRQSTPWSVGILRTYHENVIDHYDNPRNVGSFDKND.

It belongs to the NifU family. Component of the core Fe-S cluster (ISC) assembly machinery. Interacts with HSCB. It depends on [2Fe-2S] cluster as a cofactor. Expressed in roots, stems, leaves, flowers, pollen and siliques.

It is found in the mitochondrion matrix. Its subcellular location is the cytoplasm. It localises to the cytosol. It functions in the pathway cofactor biosynthesis; iron-sulfur cluster biosynthesis. In terms of biological role, scaffold protein for the de novo synthesis of iron-sulfur (Fe-S) clusters within mitochondria, which is required for maturation of both mitochondrial and cytoplasmic [2Fe-2S] and [4Fe-4S] proteins. First, a [2Fe-2S] cluster is transiently assembled on the scaffold protein ISCU (ISU1, ISU2 or ISU3). In a second step, the cluster is released from ISCU, transferred to a glutaredoxin, followed by the formation of mitochondrial [2Fe-2S] proteins, the synthesis of [4Fe-4S] clusters and their target-specific insertion into the recipient apoproteins. Cluster assembly on ISCU depends on the function of the cysteine desulfurase complex NFS1-ISD11, which serves as the sulfur donor for cluster synthesis, the iron-binding protein frataxin as the putative iron donor, and the electron transfer chain comprised of ferredoxin reductase and ferredoxin, which receive their electrons from NADH. In Arabidopsis thaliana (Mouse-ear cress), this protein is Iron-sulfur cluster assembly protein 1 (ISU1).